Consider the following 318-residue polypeptide: tRNA U34 carboxymethyltransferase (318 aa).

The carboxy-S-adenosyl-L-methionine site is built by Lys-88, Trp-102, Lys-107, Gly-126, Met-192, Tyr-196, and Arg-311.

It belongs to the class I-like SAM-binding methyltransferase superfamily. CmoB family. As to quaternary structure, homotetramer.

The enzyme catalyses carboxy-S-adenosyl-L-methionine + 5-hydroxyuridine(34) in tRNA = 5-carboxymethoxyuridine(34) in tRNA + S-adenosyl-L-homocysteine + H(+). In terms of biological role, catalyzes carboxymethyl transfer from carboxy-S-adenosyl-L-methionine (Cx-SAM) to 5-hydroxyuridine (ho5U) to form 5-carboxymethoxyuridine (cmo5U) at position 34 in tRNAs. This is tRNA U34 carboxymethyltransferase from Pseudomonas fluorescens (strain SBW25).